Consider the following 261-residue polypeptide: MRFLFAFILLCSPWVSEASQNIVTVKTIHEVASDILYDNTNYWLILDIDDVLFEGAEALSHSSWFERSIQGMRALGASEKEAWEAIYPEWLAIQHQGSIKQIETAIPLLITKVQNQDKIVFAYSERQLCAQNVTFEQLATINLSFDKPNLPYASLPPSISFTKGVLFGAEIHKGLGLQLFLDAQPDLPEKIIYIDNEKYNVMRVGEVCNQKNIPYLGIIYTAPKYLSPTYLPDIAKVQYLFRQKLLSNEAAALLLRHRLDK.

An N-terminal signal peptide occupies residues 1-17 (MRFLFAFILLCSPWVSE).

It is found in the cell outer membrane. The polypeptide is Putative outer membrane protein TC_0650 (Chlamydia muridarum (strain MoPn / Nigg)).